The sequence spans 287 residues: ATP synthase gamma chain (287 aa).

The protein belongs to the ATPase gamma chain family. As to quaternary structure, F-type ATPases have 2 components, CF(1) - the catalytic core - and CF(0) - the membrane proton channel. CF(1) has five subunits: alpha(3), beta(3), gamma(1), delta(1), epsilon(1). CF(0) has three main subunits: a, b and c.

The protein resides in the cell inner membrane. Produces ATP from ADP in the presence of a proton gradient across the membrane. The gamma chain is believed to be important in regulating ATPase activity and the flow of protons through the CF(0) complex. The chain is ATP synthase gamma chain from Photorhabdus laumondii subsp. laumondii (strain DSM 15139 / CIP 105565 / TT01) (Photorhabdus luminescens subsp. laumondii).